The primary structure comprises 255 residues: Sulfur carrier protein FdhD (255 aa).

The active-site Cysteine persulfide intermediate is the Cys103.

Belongs to the FdhD family.

It localises to the cytoplasm. Required for formate dehydrogenase (FDH) activity. Acts as a sulfur carrier protein that transfers sulfur from IscS to the molybdenum cofactor prior to its insertion into FDH. The polypeptide is Sulfur carrier protein FdhD (Sulfurisphaera tokodaii (strain DSM 16993 / JCM 10545 / NBRC 100140 / 7) (Sulfolobus tokodaii)).